The sequence spans 314 residues: Inosine-uridine preferring nucleoside hydrolase (314 aa).

A Ca(2+)-binding site is contributed by aspartate 10. Aspartate 14 contributes to the substrate binding site. The Ca(2+) site is built by aspartate 15 and threonine 126. Substrate is bound by residues asparagine 160, glutamate 166, and asparagine 168. Catalysis depends on histidine 240, which acts as the Proton donor. Aspartate 241 serves as a coordination point for Ca(2+).

Belongs to the IUNH family. In terms of assembly, homotetramer. The cofactor is Ca(2+).

The enzyme catalyses inosine + H2O = hypoxanthine + D-ribose. It catalyses the reaction uridine + H2O = D-ribose + uracil. It functions in the pathway purine metabolism; purine nucleoside salvage. Is potently inhibited by immucillin A and immucillin ACAP, which are transition state inhibitors. Catalyzes the hydrolysis of the N-glycosidic bond of all of the commonly occurring purine and pyrimidine nucleosides into ribose and the associated base, but has a preference for inosine and uridine as substrates. Likely functions in purine salvage from the host, a fundamental pathway since protozoan parasites such as L.major are incapable of de novo purine biosynthesis. The protein is Inosine-uridine preferring nucleoside hydrolase (NSNH) of Leishmania major.